A 312-amino-acid chain; its full sequence is Pectinesterase inhibitor 10 (312 aa).

The signal sequence occupies residues 1-25; sequence MNILSQTQILHLSIAILLFITTSSS. Composition is skewed to low complexity over residues 24–36 and 44–55; these read SSSL…SPSL and SPSSAPPSSLSP. A disordered region spans residues 24–141; it reads SSSLSPSSSS…PSSSSSTYSN (118 aa). Positions 56–75 are enriched in pro residues; that stretch reads SSPPPLSLSPSSPPPPPPSS. Low complexity-rich tracts occupy residues 76-85 and 93-104; these read SPLSSLSPSL and SPSSAPPSSLSP. The segment covering 105–124 has biased composition (pro residues); the sequence is SSPPPLSLSPSSPPPPPPSS. Residues 125 to 137 show a composition bias toward low complexity; sequence SPLSSLSPSSSSS. Residues asparagine 141, asparagine 153, asparagine 185, and asparagine 200 are each glycosylated (N-linked (GlcNAc...) asparagine). Cysteines 152 and 161 form a disulfide. A disulfide bridge connects residues cysteine 218 and cysteine 268.

This sequence belongs to the PMEI family.

It is found in the secreted. The protein resides in the extracellular space. The protein localises to the apoplast. Its function is as follows. Pectin methylesterase (PME) inhibitor involved in the maintenance of cell wall integrity in response to necrotrophic pathogens. Modulates PME activity and pectin methylesterification during infection by Botrytis cinerea and contributes to resistance against the pathogen. This Arabidopsis thaliana (Mouse-ear cress) protein is Pectinesterase inhibitor 10.